Reading from the N-terminus, the 389-residue chain is Protein IQ-domain 26 (389 aa).

2 consecutive IQ domains span residues 106–134 (ERWA…GLVK) and 135–157 (LQAL…SMQA). The calmodulin-binding stretch occupies residues 137–151 (ALVRGYLVRKRAAET). The segment at 347-374 (SVSGVRMVQPQPQPQTQTQQQKRSPCSY) is disordered.

The protein belongs to the IQD family. In terms of assembly, binds to multiple calmodulin (CaM) in the presence of Ca(2+) and CaM-like proteins.

The protein resides in the cell membrane. Its subcellular location is the cytoplasm. It localises to the cytoskeleton. Functionally, may be involved in cooperative interactions with calmodulins or calmodulin-like proteins. Recruits calmodulin proteins to microtubules, thus being a potential scaffold in cellular signaling and trafficking. May associate with nucleic acids and regulate gene expression at the transcriptional or post-transcriptional level. This is Protein IQ-domain 26 from Arabidopsis thaliana (Mouse-ear cress).